Reading from the N-terminus, the 637-residue chain is uncharacterized protein (637 aa).

Positions 7–34 (CDLCRLKKIKCSRGQPRCQTCTLFQADC) form a DNA-binding region, zn(2)-C6 fungal-type. The segment at 304 to 327 (SLCRTLCGQACLMAQQLNLHRKQS) adopts a C2H2-type; degenerate zinc-finger fold.

It localises to the nucleus. This is an uncharacterized protein from Schizosaccharomyces pombe (strain 972 / ATCC 24843) (Fission yeast).